The chain runs to 195 residues: Dual-action ribosomal maturation protein DarP (195 aa).

This sequence belongs to the DarP family.

It localises to the cytoplasm. Its function is as follows. Member of a network of 50S ribosomal subunit biogenesis factors which assembles along the 30S-50S interface, preventing incorrect 23S rRNA structures from forming. Promotes peptidyl transferase center (PTC) maturation. In Stenotrophomonas maltophilia (strain K279a), this protein is Dual-action ribosomal maturation protein DarP.